A 78-amino-acid chain; its full sequence is Large ribosomal subunit protein bL28 (78 aa).

It belongs to the bacterial ribosomal protein bL28 family.

The sequence is that of Large ribosomal subunit protein bL28 from Klebsiella pneumoniae (strain 342).